A 766-amino-acid polypeptide reads, in one-letter code: Ubiquitin carboxyl-terminal hydrolase creB (766 aa).

Positions 1 to 32 (MGSFLKSFRKDVGSAAPSVGAPPAKKEPQPLP) are disordered. Positions 13 to 23 (GSAAPSVGAPP) are enriched in low complexity. Residues 55 to 466 (YGMENFGNTC…CAYVLFYQET (412 aa)) enclose the USP domain. Cysteine 64 functions as the Nucleophile in the catalytic mechanism. Disordered stretches follow at residues 115-145 (EALAEKQKAANSPRPGQPPNPQQKPEDKDSP) and 243-266 (ESPQPASDVSDSVIPSSSSGSRTP). Residues 249 to 263 (SDVSDSVIPSSSSGS) are compositionally biased toward low complexity. The active-site Proton acceptor is the histidine 417. Positions 526–752 (APTAPQLSTH…HDRSSHGKWR (227 aa)) are disordered. The segment covering 548 to 572 (SPAPDPAPLTSLPPIPPIPETPPAP) has biased composition (pro residues). The stretch at 573-620 (LTSRKSDLQSKKERVKEEKERKAAEKEKEKQRRKEIETRLKDRQRRED) forms a coiled coil. Basic and acidic residues-rich tracts occupy residues 576 to 643 (RKSD…RNHA) and 734 to 747 (EQEHIKNSKHDRSS).

This sequence belongs to the peptidase C19 family. As to quaternary structure, interacts with creA, creC and qutD.

It catalyses the reaction Thiol-dependent hydrolysis of ester, thioester, amide, peptide and isopeptide bonds formed by the C-terminal Gly of ubiquitin (a 76-residue protein attached to proteins as an intracellular targeting signal).. Ubiquitin thioesterase component of the regulatory network controlling carbon source utilization through ubiquitination and deubiquitination involving creA, creB, creC, creD and acrB. Deubiquitinates the creA catabolic repressor and the quinate permease qutD. Also plays a role in response to carbon starvation and the control of extracellular proteases activity. This chain is Ubiquitin carboxyl-terminal hydrolase creB (creB), found in Emericella nidulans (strain FGSC A4 / ATCC 38163 / CBS 112.46 / NRRL 194 / M139) (Aspergillus nidulans).